We begin with the raw amino-acid sequence, 206 residues long: Large ribosomal subunit protein uL13z (206 aa).

Belongs to the universal ribosomal protein uL13 family.

This chain is Large ribosomal subunit protein uL13z (RPL13AA), found in Arabidopsis thaliana (Mouse-ear cress).